Here is a 138-residue protein sequence, read N- to C-terminus: Acidic phospholipase A2 DsM-a2/DsM-a2' (138 aa).

A signal peptide spans 1 to 16 (MRTLWIVAVCLIGVEG). 7 disulfide bridges follow: cysteine 42–cysteine 131, cysteine 44–cysteine 60, cysteine 59–cysteine 111, cysteine 65–cysteine 138, cysteine 66–cysteine 104, cysteine 73–cysteine 97, and cysteine 91–cysteine 102. Tyrosine 43, glycine 45, and glycine 47 together coordinate Ca(2+). Histidine 63 is an active-site residue. Ca(2+) is bound at residue aspartate 64. Aspartate 105 is a catalytic residue.

It belongs to the phospholipase A2 family. Group II subfamily. D49 sub-subfamily. Requires Ca(2+) as cofactor. Expressed by the venom gland.

The protein resides in the secreted. The catalysed reaction is a 1,2-diacyl-sn-glycero-3-phosphocholine + H2O = a 1-acyl-sn-glycero-3-phosphocholine + a fatty acid + H(+). Exhibits high hydrolytic activities and shows strong preference for the anionic micelles (dPPC with deoxycholate) to the zwitterionic micelles (dPPC with Triton X-100). PLA2 catalyzes the calcium-dependent hydrolysis of the 2-acyl groups in 3-sn-phosphoglycerides. This is Acidic phospholipase A2 DsM-a2/DsM-a2' from Daboia siamensis (Eastern Russel's viper).